Reading from the N-terminus, the 43-residue chain is Protein PsbN (43 aa).

Residues 7–27 (IAISISGLLVSFTGYALYIAF) traverse the membrane as a helical segment.

The protein belongs to the PsbN family.

It localises to the plastid. Its subcellular location is the chloroplast thylakoid membrane. Its function is as follows. May play a role in photosystem I and II biogenesis. This chain is Protein PsbN, found in Glycine max (Soybean).